We begin with the raw amino-acid sequence, 367 residues long: Probable outer membrane usher protein LpfC (367 aa).

Residues Met-1–Ala-30 form the signal peptide.

This sequence belongs to the fimbrial export usher family.

It localises to the cell outer membrane. In terms of biological role, part of the lpfABCC'DE fimbrial operon. LP fimbriae may participate in the interaction with eukaryotic cells by assisting in microcolony formation. Could be involved in the export and assembly of the fimbrial subunits across the outer membrane. This Escherichia coli O157:H7 protein is Probable outer membrane usher protein LpfC (lpfC).